Reading from the N-terminus, the 687-residue chain is Mediator of RNA polymerase II transcription subunit 17 (687 aa).

Positions 30-43 (LSSNPNSSLHSPTS) are enriched in low complexity. Disordered stretches follow at residues 30–70 (LSSN…NKTK) and 130–189 (QLGS…ETDD). Composition is skewed to basic and acidic residues over residues 56–70 (TSIR…NKTK), 136–147 (SDGHNSEKKDTD), and 167–183 (KDNP…KTNE).

This sequence belongs to the Mediator complex subunit 17 family. In terms of assembly, component of the Mediator complex, which is composed of at least 21 subunits that form three structurally distinct submodules. The Mediator head module contains MED6, MED8, MED11, SRB4/MED17, SRB5/MED18, ROX3/MED19, SRB2/MED20 and SRB6/MED22, the middle module contains MED1, MED4, NUT1/MED5, MED7, CSE2/MED9, NUT2/MED10, SRB7/MED21 and SOH1/MED31, and the tail module contains MED2, PGD1/MED3, RGR1/MED14, GAL11/MED15 and SIN4/MED16. The head and the middle modules interact directly with RNA polymerase II, whereas the elongated tail module interacts with gene-specific regulatory proteins. The head module may also interact with the TFIIF complex. SRB4/MED17 interacts directly with MED6, MED11, ROX3/MED19, SRB2/MED20 and SRB6/MED22. Interacts directly with the activator GAL4.

It is found in the nucleus. Functionally, component of the Mediator complex, a coactivator involved in the regulated transcription of nearly all RNA polymerase II-dependent genes. Mediator functions as a bridge to convey information from gene-specific regulatory proteins to the basal RNA polymerase II transcription machinery. The Mediator complex, having a compact conformation in its free form, is recruited to promoters by direct interactions with regulatory proteins and serves for the assembly of a functional preinitiation complex with RNA polymerase II and the general transcription factors. The Mediator complex unfolds to an extended conformation and partially surrounds RNA polymerase II, specifically interacting with the unphosphorylated form of the C-terminal domain (CTD) of RNA polymerase II. The Mediator complex dissociates from the RNA polymerase II holoenzyme and stays at the promoter when transcriptional elongation begins. This chain is Mediator of RNA polymerase II transcription subunit 17 (SRB4), found in Saccharomyces cerevisiae (strain ATCC 204508 / S288c) (Baker's yeast).